Here is a 336-residue protein sequence, read N- to C-terminus: Holliday junction branch migration complex subunit RuvB (336 aa).

A large ATPase domain (RuvB-L) region spans residues 1-182 (MKERIVNLET…FGMSFRMQFY (182 aa)). ATP contacts are provided by residues Leu-21, Arg-22, Gly-63, Lys-66, Thr-67, Ser-68, 129–131 (EDF), Arg-172, Tyr-182, and Arg-219. Residue Thr-67 coordinates Mg(2+). Positions 183 to 253 (SPSELSLIIK…ITLHALNELG (71 aa)) are small ATPAse domain (RuvB-S). A head domain (RuvB-H) region spans residues 256 to 336 (ELGFDEADLA…IPTLNPQTLF (81 aa)). DNA is bound by residues Arg-310 and Arg-315.

Belongs to the RuvB family. In terms of assembly, homohexamer. Forms an RuvA(8)-RuvB(12)-Holliday junction (HJ) complex. HJ DNA is sandwiched between 2 RuvA tetramers; dsDNA enters through RuvA and exits via RuvB. An RuvB hexamer assembles on each DNA strand where it exits the tetramer. Each RuvB hexamer is contacted by two RuvA subunits (via domain III) on 2 adjacent RuvB subunits; this complex drives branch migration. In the full resolvosome a probable DNA-RuvA(4)-RuvB(12)-RuvC(2) complex forms which resolves the HJ.

Its subcellular location is the cytoplasm. The catalysed reaction is ATP + H2O = ADP + phosphate + H(+). Its function is as follows. The RuvA-RuvB-RuvC complex processes Holliday junction (HJ) DNA during genetic recombination and DNA repair, while the RuvA-RuvB complex plays an important role in the rescue of blocked DNA replication forks via replication fork reversal (RFR). RuvA specifically binds to HJ cruciform DNA, conferring on it an open structure. The RuvB hexamer acts as an ATP-dependent pump, pulling dsDNA into and through the RuvAB complex. RuvB forms 2 homohexamers on either side of HJ DNA bound by 1 or 2 RuvA tetramers; 4 subunits per hexamer contact DNA at a time. Coordinated motions by a converter formed by DNA-disengaged RuvB subunits stimulates ATP hydrolysis and nucleotide exchange. Immobilization of the converter enables RuvB to convert the ATP-contained energy into a lever motion, pulling 2 nucleotides of DNA out of the RuvA tetramer per ATP hydrolyzed, thus driving DNA branch migration. The RuvB motors rotate together with the DNA substrate, which together with the progressing nucleotide cycle form the mechanistic basis for DNA recombination by continuous HJ branch migration. Branch migration allows RuvC to scan DNA until it finds its consensus sequence, where it cleaves and resolves cruciform DNA. This Helicobacter pylori (strain J99 / ATCC 700824) (Campylobacter pylori J99) protein is Holliday junction branch migration complex subunit RuvB.